We begin with the raw amino-acid sequence, 453 residues long: Serine incorporator 1 (453 aa).

A lipid anchor (N-myristoyl glycine) is attached at Gly-2. Residues 2 to 39 are Cytoplasmic-facing; the sequence is GSVLGLCSVASWIPCLCGSAPCLLCRCCPSGNNSTVTR. A helical transmembrane segment spans residues 40–60; that stretch reads LIYALFLLVGVCVACVMLIPG. Residues 61–88 lie on the Lumenal side of the membrane; it reads MEEQLNKIPGFCENEKGVVPCNILVGYK. Residues 89–109 form a helical membrane-spanning segment; that stretch reads AVYRLCFGLAMFYLLLSLLMI. Residues 110-123 lie on the Cytoplasmic side of the membrane; that stretch reads KVKSSSDPRAAVHN. Residues 124–144 form a helical membrane-spanning segment; it reads GFWFFKFATAVAIIIGAFFIP. Residues 145–151 are Lumenal-facing; sequence EGTFTTV. Residues 152-172 form a helical membrane-spanning segment; that stretch reads WFYVGMAGAFCFILIQLVLLI. The Cytoplasmic segment spans residues 173-197; sequence DFAHSWNESWVEKMEEGNSRCWYAA. A helical transmembrane segment spans residues 198–218; it reads LLSATALNYLLSLVAVVLFFV. Over 219 to 231 the chain is Lumenal; sequence YYTHPASCAENKA. Residues 232 to 252 form a helical membrane-spanning segment; the sequence is FISVNMLLCIGASVMSILPKI. At 253-259 the chain is on the cytoplasmic side; sequence QESQPRS. The chain crosses the membrane as a helical span at residues 260–280; the sequence is GLLQSSVITVYTMYLTWSAMT. The Lumenal portion of the chain corresponds to 281–309; sequence NEPETNCNPSLLSIIGFNTTRPIPKDGQS. A helical membrane pass occupies residues 310 to 330; that stretch reads VQWWHPQGIIGLVLFLLCVFY. The Cytoplasmic portion of the chain corresponds to 331–387; the sequence is SSIRTSNNSQVNKLTLTSDESTLIEDGNGRSDGSLDDGDGIHRAVDNERDGVTYSYS. The residue at position 351 (Ser-351) is a Phosphoserine. A Phosphothreonine modification is found at Thr-352. Phosphoserine occurs at positions 361 and 364. A helical transmembrane segment spans residues 388–408; it reads FFHFMLFLASLYIMMTLTNWY. Residues 409–426 lie on the Lumenal side of the membrane; sequence RYEPSREMKSQWTAVWVK. A helical membrane pass occupies residues 427–447; it reads ISSSWIGLVLYVWTLVAPLVL. Residues 448 to 453 lie on the Cytoplasmic side of the membrane; that stretch reads TNRDFD.

This sequence belongs to the TDE1 family. Interacts with SPTLC1. In terms of tissue distribution, highly expressed in the neuronal populations such as Purkinje cells in the cerebellum, brainstem and spinal motor neurons, locus coeruleus and raphe nuclei.

The protein resides in the endoplasmic reticulum membrane. Enhances the incorporation of serine into phosphatidylserine and sphingolipids. This Mus musculus (Mouse) protein is Serine incorporator 1 (Serinc1).